The following is a 259-amino-acid chain: Acyl-[acyl-carrier-protein]--UDP-N-acetylglucosamine O-acyltransferase (259 aa).

The protein belongs to the transferase hexapeptide repeat family. LpxA subfamily. As to quaternary structure, homotrimer.

It localises to the cytoplasm. It catalyses the reaction a (3R)-hydroxyacyl-[ACP] + UDP-N-acetyl-alpha-D-glucosamine = a UDP-3-O-[(3R)-3-hydroxyacyl]-N-acetyl-alpha-D-glucosamine + holo-[ACP]. Its pathway is glycolipid biosynthesis; lipid IV(A) biosynthesis; lipid IV(A) from (3R)-3-hydroxytetradecanoyl-[acyl-carrier-protein] and UDP-N-acetyl-alpha-D-glucosamine: step 1/6. Involved in the biosynthesis of lipid A, a phosphorylated glycolipid that anchors the lipopolysaccharide to the outer membrane of the cell. This chain is Acyl-[acyl-carrier-protein]--UDP-N-acetylglucosamine O-acyltransferase, found in Psychrobacter arcticus (strain DSM 17307 / VKM B-2377 / 273-4).